The sequence spans 144 residues: 3-dehydroquinate dehydratase (144 aa).

The Proton acceptor role is filled by Y23. Substrate-binding residues include N74, H80, and D87. H100 functions as the Proton donor in the catalytic mechanism. Substrate-binding positions include 101 to 102 (LS) and R111.

Belongs to the type-II 3-dehydroquinase family. Homododecamer.

It carries out the reaction 3-dehydroquinate = 3-dehydroshikimate + H2O. Its pathway is metabolic intermediate biosynthesis; chorismate biosynthesis; chorismate from D-erythrose 4-phosphate and phosphoenolpyruvate: step 3/7. Its function is as follows. Catalyzes a trans-dehydration via an enolate intermediate. The polypeptide is 3-dehydroquinate dehydratase (Hydrogenovibrio crunogenus (strain DSM 25203 / XCL-2) (Thiomicrospira crunogena)).